The chain runs to 71 residues: SPI-2 type 3 secretion system needle filament protein (71 aa).

It belongs to the SctF family. As to quaternary structure, the core secretion machinery of the T3SS is composed of approximately 20 different proteins, including cytoplasmic components, a base, an export apparatus and a needle. This subunit polymerizes and forms the helical needle filament.

It localises to the secreted. The protein resides in the cell surface. In terms of biological role, component of the type III secretion system (T3SS), also called injectisome, which is used to inject bacterial effector proteins into eukaryotic host cells. SsaG/SctF2 forms the external needle filament that protrudes from the bacterial surface. Functionally, during infection, can induce innate immune responses. The needle proteins interact with host TLR2 or TLR4, and induce signaling by NF-kappa-B and/or AP-1. This activation is MyD88 dependent and results in increased expression of cytokines, including TNF-alpha, IL-6 and IL-8. This Salmonella typhimurium (strain LT2 / SGSC1412 / ATCC 700720) protein is SPI-2 type 3 secretion system needle filament protein.